A 535-amino-acid chain; its full sequence is Heparanase (535 aa).

The N-terminal stretch at 1–27 (MLRLLLLWLWGPLGALAQGAPAGTAPT) is a signal peptide. Heparan sulfate group is bound by residues 54 to 56 (DAS) and threonine 89. The propeptide at 102-149 (PTSEERSYWKSQVNHDICRSEPVSAAVLRKLQVEWPFQELLLLREQYQ) is linker peptide. A disulfide bond links cysteine 119 and cysteine 171. Heparan sulfate group is bound at residue 150–154 (KEFKN). Asparagine 192 and asparagine 209 each carry an N-linked (GlcNAc...) asparagine glycan. Glutamate 217 (proton donor) is an active-site residue. Heparan sulfate group contacts are provided by residues 262–272 (QPRGKTVKLLR), histidine 288, and arginine 295. The interval 280 to 409 (EVIDSLTWHH…LLFKKLVGPR (130 aa)) is required for heterodimerization with the heparanase 8 kDa subunit. The active-site Nucleophile is glutamate 335. Heparan sulfate group is bound by residues 340 to 342 (YGG) and 381 to 383 (GNY). Cysteine 429 and cysteine 534 are joined by a disulfide. Residue asparagine 451 is glycosylated (N-linked (GlcNAc...) asparagine). Residues 519-535 (FSYGFFVIRNAKIAACI) form a required for transferring proheparanase to the Golgi apparatus, secretion and subsequent enzyme activity and for enhancement of PKB/AKT1 phosphorylation region.

The protein belongs to the glycosyl hydrolase 79 family. Heterodimer; heterodimer formation between the 8 kDa and the 50 kDa subunits is required for enzyme activity. Interacts with TF; the interaction, inhibited by heparin, enhances the generation of activated factor X and activates coagulation. Interacts with HRG; the interaction is enhanced at acidic pH, partially inhibits binding of HPSE to cell surface receptors and modulates its enzymatic activity. Interacts with SDC1; the interaction enhances the shedding of SDC1. Interacts with HPSE2. Post-translationally, proteolytically processed. The cleavage of the 65 kDa form leads to the generation of a linker peptide, and the 8 kDa and 50 kDa products. The active form, the 8/50 kDa heterodimer, is resistant to degradation. Complete removal of the linker peptide appears to be a prerequisite to the complete activation of the enzyme. N-glycosylated. Glycosylation of the 50 kDa subunit appears to be essential for its solubility. As to expression, expressed in skin, mainly in the stratum granulosum and the first layer of the stratum corneum in the upper part of the epidermis. Also detected in hair follicles and in sebaceous glands.

The protein localises to the lysosome membrane. The protein resides in the secreted. Its subcellular location is the nucleus. It catalyses the reaction endohydrolysis of (1-&gt;4)-beta-D-glycosidic bonds of heparan sulfate chains in heparan sulfate proteoglycan.. With respect to regulation, inhibited by EDTA and activated by calcium and magnesium. Inhibited by laminarin sulfate and, to a lower extent, by heparin and sulfamin. Endoglycosidase that cleaves heparan sulfate proteoglycans (HSPGs) into heparan sulfate side chains and core proteoglycans. Participates in extracellular matrix (ECM) degradation and remodeling. Selectively cleaves the linkage between a glucuronic acid unit and an N-sulfo glucosamine unit carrying either a 3-O-sulfo or a 6-O-sulfo group. Can also cleave the linkage between a glucuronic acid unit and an N-sulfo glucosamine unit carrying a 2-O-sulfo group, but not linkages between a glucuronic acid unit and a 2-O-sulfated iduronic acid moiety. It is essentially inactive at neutral pH but becomes active under acidic conditions such as during tumor invasion and in inflammatory processes. Facilitates cell migration associated with metastasis, wound healing and inflammation. Enhances shedding of syndecans, and increases endothelial invasion and angiogenesis in myelomas. Acts as a procoagulant by increasing the generation of activation factor X in the presence of tissue factor and activation factor VII. Increases cell adhesion to the extracellular matrix (ECM), independent of its enzymatic activity. Induces AKT1/PKB phosphorylation via lipid rafts increasing cell mobility and invasion. Heparin increases this AKT1/PKB activation. Regulates osteogenesis. Enhances angiogenesis through up-regulation of SRC-mediated activation of VEGF. Implicated in hair follicle inner root sheath differentiation and hair homeostasis. The protein is Heparanase (Hpse) of Mus musculus (Mouse).